Reading from the N-terminus, the 122-residue chain is Large ribosomal subunit protein uL14 (122 aa).

It belongs to the universal ribosomal protein uL14 family. In terms of assembly, part of the 50S ribosomal subunit. Forms a cluster with proteins L3 and L19. In the 70S ribosome, L14 and L19 interact and together make contacts with the 16S rRNA in bridges B5 and B8.

In terms of biological role, binds to 23S rRNA. Forms part of two intersubunit bridges in the 70S ribosome. In Rickettsia canadensis (strain McKiel), this protein is Large ribosomal subunit protein uL14.